We begin with the raw amino-acid sequence, 147 residues long: Large ribosomal subunit protein uL13 (147 aa).

Belongs to the universal ribosomal protein uL13 family. As to quaternary structure, part of the 50S ribosomal subunit.

Functionally, this protein is one of the early assembly proteins of the 50S ribosomal subunit, although it is not seen to bind rRNA by itself. It is important during the early stages of 50S assembly. The sequence is that of Large ribosomal subunit protein uL13 from Mycolicibacterium gilvum (strain PYR-GCK) (Mycobacterium gilvum (strain PYR-GCK)).